We begin with the raw amino-acid sequence, 646 residues long: UvrABC system protein B (646 aa).

The 388-residue stretch at 25 to 412 (NGIKAGMREQ…QNIVEQIIRP (388 aa)) folds into the Helicase ATP-binding domain. An ATP-binding site is contributed by 38–45 (GVTGSGKT). The Beta-hairpin signature appears at 91-114 (YYDFYQPEAYIPQTDTYIDKEASI). The 167-residue stretch at 428–594 (QVDDLLSEIR…STRRTLREEE (167 aa)) folds into the Helicase C-terminal domain. The 36-residue stretch at 611–646 (ELIIKDLEAEMRDAARNLEFERAARIRDRIMSLKSN) folds into the UVR domain.

The protein belongs to the UvrB family. In terms of assembly, forms a heterotetramer with UvrA during the search for lesions. Interacts with UvrC in an incision complex.

It localises to the cytoplasm. Functionally, the UvrABC repair system catalyzes the recognition and processing of DNA lesions. A damage recognition complex composed of 2 UvrA and 2 UvrB subunits scans DNA for abnormalities. Upon binding of the UvrA(2)B(2) complex to a putative damaged site, the DNA wraps around one UvrB monomer. DNA wrap is dependent on ATP binding by UvrB and probably causes local melting of the DNA helix, facilitating insertion of UvrB beta-hairpin between the DNA strands. Then UvrB probes one DNA strand for the presence of a lesion. If a lesion is found the UvrA subunits dissociate and the UvrB-DNA preincision complex is formed. This complex is subsequently bound by UvrC and the second UvrB is released. If no lesion is found, the DNA wraps around the other UvrB subunit that will check the other stand for damage. The chain is UvrABC system protein B from Methanothermobacter thermautotrophicus (strain ATCC 29096 / DSM 1053 / JCM 10044 / NBRC 100330 / Delta H) (Methanobacterium thermoautotrophicum).